Consider the following 489-residue polypeptide: Dihydropyrimidinase 1 (489 aa).

Residues His61, His63, and Lys156 each contribute to the Zn(2+) site. Residue Lys156 is modified to N6-carboxylysine. Position 161 (Tyr161) interacts with substrate. Zn(2+) contacts are provided by His189 and His245. Ser295 serves as a coordination point for substrate. Residue Asp323 coordinates Zn(2+). Substrate is bound at residue Asn344.

The protein belongs to the metallo-dependent hydrolases superfamily. Hydantoinase/dihydropyrimidinase family. In terms of assembly, homotetramer. Zn(2+) is required as a cofactor. Post-translationally, carboxylation allows a single lysine to coordinate two zinc ions.

Its subcellular location is the nucleus. The catalysed reaction is 5,6-dihydrouracil + H2O = 3-(carbamoylamino)propanoate + H(+). This chain is Dihydropyrimidinase 1 (dhp-1), found in Caenorhabditis briggsae.